Reading from the N-terminus, the 201-residue chain is CDP-diacylglycerol--serine O-phosphatidyltransferase (201 aa).

A run of 6 helical transmembrane segments spans residues 19–39, 57–77, 88–108, 112–132, 133–153, and 162–182; these read IITGLLAILLNSFSLIYLSII, FGAELDSISDVVSFGVAPAYL, LISAIIFCLCGALRLARFGIL, GFIGLPIPAGALLLVGFCQLI, NSYLINSILAILIGLLMISDI, and IFIYIFAVSLCLAIVGIPHFA.

It belongs to the CDP-alcohol phosphatidyltransferase class-I family.

It localises to the cell membrane. The enzyme catalyses a CDP-1,2-diacyl-sn-glycerol + L-serine = a 1,2-diacyl-sn-glycero-3-phospho-L-serine + CMP + H(+). This chain is CDP-diacylglycerol--serine O-phosphatidyltransferase (pssA), found in Methanocaldococcus jannaschii (strain ATCC 43067 / DSM 2661 / JAL-1 / JCM 10045 / NBRC 100440) (Methanococcus jannaschii).